The primary structure comprises 494 residues: DDB1- and CUL4-associated factor 4 (494 aa).

Positions 1-65 (MHQSSWKSRR…AGSSSVPDLP (65 aa)) are disordered. The segment covering 7–20 (KSRRHRRRGHRHSA) has biased composition (basic residues). Low complexity predominate over residues 51-60 (STSSTAGSSS). 2 WD repeats span residues 367–406 (FHDS…CIRQ) and 409–450 (GHVN…LLRT).

As to quaternary structure, interacts with DDB1 and CUL4A.

It participates in protein modification; protein ubiquitination. Functionally, may function as a substrate receptor for CUL4-DDB1 E3 ubiquitin-protein ligase complex. The chain is DDB1- and CUL4-associated factor 4 (DCAF4) from Bos taurus (Bovine).